A 170-amino-acid polypeptide reads, in one-letter code: MAVLQVLHFPDERLRITAQPVKEVNADIQRIVDDMFDTMYEEEGIGLAATQVDIHQRIIVIDVSEERDQRLVLINPELIEKSGDTGIEEGCLSIPETRALVPRAEHVKVRALDREGKTFELEASELLAICIQHEMDHLVGKLFIDYLSPLKRQRIRQKLEKLAKQNSRAR.

Residues C91 and H133 each contribute to the Fe cation site. Residue E134 is part of the active site. H137 serves as a coordination point for Fe cation.

This sequence belongs to the polypeptide deformylase family. Requires Fe(2+) as cofactor.

The enzyme catalyses N-terminal N-formyl-L-methionyl-[peptide] + H2O = N-terminal L-methionyl-[peptide] + formate. Its function is as follows. Removes the formyl group from the N-terminal Met of newly synthesized proteins. Requires at least a dipeptide for an efficient rate of reaction. N-terminal L-methionine is a prerequisite for activity but the enzyme has broad specificity at other positions. In Pectobacterium carotovorum subsp. carotovorum (strain PC1), this protein is Peptide deformylase.